A 980-amino-acid polypeptide reads, in one-letter code: Envelope glycoprotein B (980 aa).

The segment covering 1–14 has biased composition (polar residues); sequence MSSGCRSVGGSTWG. 2 disordered regions span residues 1 to 20 and 88 to 118; these read MSSG…RGDG and TTPS…TETP. The first 86 residues, 1–86, serve as a signal peptide directing secretion; the sequence is MSSGCRSVGG…LFGSCVVRAV (86 aa). The Virion surface portion of the chain corresponds to 87 to 849; it reads PTTPSPPTST…SGIASFLNNP (763 aa). Residues 96-118 show a composition bias toward low complexity; it reads TPTSMSTHSHGTVDPTLLPTETP. 5 cysteine pairs are disulfide-bonded: C140/C647, C157/C603, C231/C296, C389/C437, and C668/C708. N165 carries N-linked (GlcNAc...) asparagine; by host glycosylation. Residues 197-203 form an involved in fusion and/or binding to host membrane region; sequence VWKGYSH. A glycan (N-linked (GlcNAc...) asparagine; by host) is linked at N275. Residues 282 to 290 are involved in fusion and/or binding to host membrane; sequence GWMPWRHYT. N380, N423, N497, N514, N515, and N560 each carry an N-linked (GlcNAc...) asparagine; by host glycan. The segment covering 505-516 has biased composition (low complexity); sequence LLNPNANNNNNT. The tract at residues 505–535 is disordered; the sequence is LLNPNANNNNNTTRRRRSLLSVPEPQPTQDG. N-linked (GlcNAc...) asparagine; by host glycans are attached at residues N727 and N749. Hydrophobic membrane proximal region regions lie at residues 794–847 and 823–843; these read IDSV…SFLN and AVGT…SGIA. Residues 850–870 traverse the membrane as a helical segment; the sequence is FGGLAIGLLVIAGLVAAFFAY. Residues 871–980 are Intravirion-facing; sequence RYVMQIRSNP…NDTMENEKMV (110 aa). The short motif at 925–928 is the Golgi targeting element; the sequence is YMSM. N-linked (GlcNAc...) asparagine; by host glycosylation is present at N952. The short motif at 965–968 is the Internalization motif element; the sequence is YTRL. N971 carries an N-linked (GlcNAc...) asparagine; by host glycan.

Belongs to the herpesviridae glycoprotein B family. Homotrimer; disulfide-linked. Binds to heparan sulfate proteoglycans. Interacts with gH/gL heterodimer. Post-translationally, a proteolytic cleavage by host furin generates two subunits that remain linked by disulfide bonds.

Its subcellular location is the virion membrane. It localises to the host cell membrane. It is found in the host endosome membrane. The protein localises to the host Golgi apparatus membrane. Functionally, envelope glycoprotein that forms spikes at the surface of virion envelope. Essential for the initial attachment to heparan sulfate moieties of the host cell surface proteoglycans. Involved in fusion of viral and cellular membranes leading to virus entry into the host cell. Following initial binding to its host receptors, membrane fusion is mediated by the fusion machinery composed at least of gB and the heterodimer gH/gL. May be involved in the fusion between the virion envelope and the outer nuclear membrane during virion egress. This Equine herpesvirus 1 (strain HVS25A) (EHV-1) protein is Envelope glycoprotein B.